The sequence spans 622 residues: C6 finger transcription factor fumR (622 aa).

Residues C94–C123 constitute a DNA-binding region (zn(2)-C6 fungal-type). Disordered regions lie at residues P127 to H175, A206 to L248, F299 to I360, and P556 to D585. Composition is skewed to polar residues over residues P148 to D167, V217 to Q226, and R347 to I360. Residues P556–A571 show a composition bias toward low complexity.

The protein resides in the nucleus. Its function is as follows. Transcription factor that regulates the expression of the gene clusters that mediate the biosynthesis of pseurotin and fumagillin. The protein is C6 finger transcription factor fumR of Aspergillus fumigatus (strain ATCC MYA-4609 / CBS 101355 / FGSC A1100 / Af293) (Neosartorya fumigata).